The primary structure comprises 239 residues: tRNA (guanine-N(7)-)-methyltransferase (239 aa).

The S-adenosyl-L-methionine site is built by E69, E94, D121, and D144. The active site involves D144. Substrate is bound at residue K148. Residues 150–155 are interaction with RNA; that stretch reads RHNKRR. Substrate contacts are provided by residues D180 and 217 to 220; that span reads TKFE.

It belongs to the class I-like SAM-binding methyltransferase superfamily. TrmB family. Monomer.

The enzyme catalyses guanosine(46) in tRNA + S-adenosyl-L-methionine = N(7)-methylguanosine(46) in tRNA + S-adenosyl-L-homocysteine. Its pathway is tRNA modification; N(7)-methylguanine-tRNA biosynthesis. In terms of biological role, catalyzes the formation of N(7)-methylguanine at position 46 (m7G46) in tRNA. This chain is tRNA (guanine-N(7)-)-methyltransferase, found in Photorhabdus laumondii subsp. laumondii (strain DSM 15139 / CIP 105565 / TT01) (Photorhabdus luminescens subsp. laumondii).